We begin with the raw amino-acid sequence, 186 residues long: Elongation factor P (186 aa).

The protein belongs to the elongation factor P family.

Its subcellular location is the cytoplasm. It participates in protein biosynthesis; polypeptide chain elongation. Its function is as follows. Involved in peptide bond synthesis. Stimulates efficient translation and peptide-bond synthesis on native or reconstituted 70S ribosomes in vitro. Probably functions indirectly by altering the affinity of the ribosome for aminoacyl-tRNA, thus increasing their reactivity as acceptors for peptidyl transferase. In Acidobacterium capsulatum (strain ATCC 51196 / DSM 11244 / BCRC 80197 / JCM 7670 / NBRC 15755 / NCIMB 13165 / 161), this protein is Elongation factor P.